Consider the following 631-residue polypeptide: PTS system beta-glucoside-specific EIIBCA component (631 aa).

The PTS EIIB type-1 domain maps to 1-86 (MNYETLASEI…LSLDGMARFS (86 aa)). Catalysis depends on Cys-26, which acts as the Phosphocysteine intermediate; for EIIB activity. The 362-residue stretch at 105–466 (DIISSIFTPF…DETQPAAADS (362 aa)) folds into the PTS EIIC type-1 domain. 10 helical membrane-spanning segments follow: residues 120–140 (ATGI…ISES), 146–166 (LLFA…GYTA), 175–195 (FTTL…AFNA), 206–226 (FLGI…ILFA), 248–268 (FFTP…LIGP), 295–315 (VMGA…FVPL), 328–348 (LLPL…GVLL), 358–378 (IAGS…VYGV), 385–405 (PFIF…YAHT), and 434–454 (AVIG…SFGV). Residues 501–605 (DRTFASGVMG…DLTTPIVITN (105 aa)) enclose the PTS EIIA type-1 domain. His-553 acts as the Tele-phosphohistidine intermediate; for EIIA activity in catalysis.

The protein resides in the cell inner membrane. The phosphoenolpyruvate-dependent sugar phosphotransferase system (sugar PTS), a major carbohydrate active -transport system, catalyzes the phosphorylation of incoming sugar substrates concomitantly with their translocation across the cell membrane. This system is involved in beta-glucoside transport. Functionally, acts both as a kinase and as a phosphatase on ArbG. The protein is PTS system beta-glucoside-specific EIIBCA component (arbF) of Dickeya chrysanthemi (Pectobacterium chrysanthemi).